Here is a 122-residue protein sequence, read N- to C-terminus: Large ribosomal subunit protein uL14 (122 aa).

This sequence belongs to the universal ribosomal protein uL14 family. As to quaternary structure, part of the 50S ribosomal subunit. Forms a cluster with proteins L3 and L19. In the 70S ribosome, L14 and L19 interact and together make contacts with the 16S rRNA in bridges B5 and B8.

Binds to 23S rRNA. Forms part of two intersubunit bridges in the 70S ribosome. This chain is Large ribosomal subunit protein uL14, found in Chlorobium phaeobacteroides (strain DSM 266 / SMG 266 / 2430).